The sequence spans 529 residues: Bifunctional purine biosynthesis protein PurH (529 aa).

Residues 8-158 (PSAPDLVAPK…KNHGYVAVCT (151 aa)) form the MGS-like domain.

The protein belongs to the PurH family.

It carries out the reaction (6R)-10-formyltetrahydrofolate + 5-amino-1-(5-phospho-beta-D-ribosyl)imidazole-4-carboxamide = 5-formamido-1-(5-phospho-D-ribosyl)imidazole-4-carboxamide + (6S)-5,6,7,8-tetrahydrofolate. The catalysed reaction is IMP + H2O = 5-formamido-1-(5-phospho-D-ribosyl)imidazole-4-carboxamide. It participates in purine metabolism; IMP biosynthesis via de novo pathway; 5-formamido-1-(5-phospho-D-ribosyl)imidazole-4-carboxamide from 5-amino-1-(5-phospho-D-ribosyl)imidazole-4-carboxamide (10-formyl THF route): step 1/1. The protein operates within purine metabolism; IMP biosynthesis via de novo pathway; IMP from 5-formamido-1-(5-phospho-D-ribosyl)imidazole-4-carboxamide: step 1/1. The polypeptide is Bifunctional purine biosynthesis protein PurH (Caulobacter vibrioides (strain ATCC 19089 / CIP 103742 / CB 15) (Caulobacter crescentus)).